Consider the following 364-residue polypeptide: Caffeic acid 3-O-methyltransferase 3 (364 aa).

129–135 is a substrate binding site; sequence MNQDKVL. The interval 161–179 is substrate binding; sequence AFEYHGTDPRFNKVFNKGM. S-adenosyl-L-methionine-binding residues include G207, D230, D250, M251, and K264. The Proton acceptor role is filled by H268.

The protein belongs to the class I-like SAM-binding methyltransferase superfamily. Cation-independent O-methyltransferase family. COMT subfamily. Homodimer.

The catalysed reaction is (E)-caffeate + S-adenosyl-L-methionine = (E)-ferulate + S-adenosyl-L-homocysteine + H(+). The protein operates within aromatic compound metabolism; phenylpropanoid biosynthesis. Its function is as follows. Catalyzes the conversion of caffeic acid to ferulic acid and of 5-hydroxyferulic acid to sinapic acid. The resulting products may subsequently be converted to the corresponding alcohols that are incorporated into lignins. In Populus kitakamiensis (Aspen), this protein is Caffeic acid 3-O-methyltransferase 3 (HOMT3).